The sequence spans 117 residues: Con-Ins T3 (117 aa).

The signal sequence occupies residues 1–24 (MTTSFYFLLMALGLLLYVCQSSFG). The propeptide occupies 25–29 (NQHTR). P34 is modified (4-hydroxyproline; partial). Cystine bridges form between C38-C101, C50-C114, and C100-C105. Residues 53–94 (KRNDAGKKRGQASPLWQRGGSLSMLKARAKRNEAFHLQRAHR) constitute a propeptide, c peptide. At E98 the chain carries 4-carboxyglutamate. The residue at position 109 (E109) is a 4-carboxyglutamate; partial. C114 is modified (cysteine amide). Positions 116 to 117 (NS) are excised as a propeptide.

The protein belongs to the insulin family. In terms of assembly, heterodimer of A and B chains; disulfide-linked. As to expression, expressed by the venom gland.

Its subcellular location is the secreted. This venom insulin facilitates prey capture by rapidly inducing hypoglycemic shock. It is one of the smallest known insulin found in nature and lacks the C-terminal segment of the B chain that, in human insulin, mediates engagement of the insulin receptor (INSR) and assembly of the hormone's hexameric storage form. Despite lacking this segment, it both binds and activates human insulin receptor (long isoform (HIR-B) OF INSR) with only a 10-fold lower potency. In vivo, intraperitoneal injection of this peptide into zebrafish lowers blood glucose with the same potency than human insulin. In addition, when applied to water, this peptide reduces overall locomotor activity of zebrafish larvae, observed as a significant decrease in the percentage of time spent swimming and movement frequency. In Conus tulipa (Fish-hunting cone snail), this protein is Con-Ins T3.